The sequence spans 198 residues: Pyridoxal 5'-phosphate synthase subunit PdxT (198 aa).

Residue 49-51 coordinates L-glutamine; that stretch reads GES. Cys81 (nucleophile) is an active-site residue. Residues Arg112 and 140 to 141 each bind L-glutamine; that span reads IR. Residues His176 and Glu178 each act as charge relay system in the active site.

The protein belongs to the glutaminase PdxT/SNO family. In terms of assembly, in the presence of PdxS, forms a dodecamer of heterodimers. Only shows activity in the heterodimer.

It catalyses the reaction aldehydo-D-ribose 5-phosphate + D-glyceraldehyde 3-phosphate + L-glutamine = pyridoxal 5'-phosphate + L-glutamate + phosphate + 3 H2O + H(+). It carries out the reaction L-glutamine + H2O = L-glutamate + NH4(+). The protein operates within cofactor biosynthesis; pyridoxal 5'-phosphate biosynthesis. In terms of biological role, catalyzes the hydrolysis of glutamine to glutamate and ammonia as part of the biosynthesis of pyridoxal 5'-phosphate. The resulting ammonia molecule is channeled to the active site of PdxS. The polypeptide is Pyridoxal 5'-phosphate synthase subunit PdxT (Methanocella arvoryzae (strain DSM 22066 / NBRC 105507 / MRE50)).